The chain runs to 207 residues: Uridine kinase (207 aa).

11 to 18 (GGSGSGKT) is an ATP binding site.

This sequence belongs to the uridine kinase family.

The protein localises to the cytoplasm. The catalysed reaction is uridine + ATP = UMP + ADP + H(+). It catalyses the reaction cytidine + ATP = CMP + ADP + H(+). The protein operates within pyrimidine metabolism; CTP biosynthesis via salvage pathway; CTP from cytidine: step 1/3. It participates in pyrimidine metabolism; UMP biosynthesis via salvage pathway; UMP from uridine: step 1/1. This chain is Uridine kinase, found in Staphylococcus epidermidis (strain ATCC 35984 / DSM 28319 / BCRC 17069 / CCUG 31568 / BM 3577 / RP62A).